An 800-amino-acid chain; its full sequence is Transducin beta-like protein 3 (800 aa).

The residue at position 2 (A2) is an N-acetylalanine. WD repeat units lie at residues 64 to 105, 107 to 146, 149 to 190, 193 to 232, 245 to 284, 290 to 329, 332 to 372, 374 to 413, 419 to 459, 477 to 516, 519 to 560, 562 to 602, and 604 to 642; these read EDQE…RLWK, IHTAPVASMAFDATSTLLATGGCDGAVRVWDIVQHYGTHH, GSPG…CLAV, AHYSAVTSLSFSEDGHTMLSSGRDKICIVWDLRSYETSRT, LPEEPALALGVKNSGLHFLTAGDQGILRVWEAASGQCVYT, GLRQELTHCTLARAAGLLLTVTADHNLLLYEARSLQLQKQ, GYSE…CQIL, GHTDIVLALDVFRKGWLFASCAKDQSIRIWRMNKAGQVAC, GHTH…PSKN, CHDKDINSLAVSPNDKLLATGSQDRTAKLWALPQCQLLGV, GHRR…KTFE, HDAS…RTLD, and HEDKVWGLHCSRLDDHAITGGSDSRIILWKDVTEAEQAE. K407 participates in a covalent cross-link: Glycyl lysine isopeptide (Lys-Gly) (interchain with G-Cter in SUMO2).

Part of the small subunit (SSU) processome, composed of more than 70 proteins and the RNA chaperone small nucleolar RNA (snoRNA) U3.

Its subcellular location is the nucleus. The protein resides in the nucleolus. Functionally, part of the small subunit (SSU) processome, first precursor of the small eukaryotic ribosomal subunit. During the assembly of the SSU processome in the nucleolus, many ribosome biogenesis factors, an RNA chaperone and ribosomal proteins associate with the nascent pre-rRNA and work in concert to generate RNA folding, modifications, rearrangements and cleavage as well as targeted degradation of pre-ribosomal RNA by the RNA exosome. The protein is Transducin beta-like protein 3 (Tbl3) of Rattus norvegicus (Rat).